We begin with the raw amino-acid sequence, 229 residues long: Large ribosomal subunit protein uL1 (229 aa).

The protein belongs to the universal ribosomal protein uL1 family. In terms of assembly, part of the 50S ribosomal subunit.

Binds directly to 23S rRNA. The L1 stalk is quite mobile in the ribosome, and is involved in E site tRNA release. In terms of biological role, protein L1 is also a translational repressor protein, it controls the translation of the L11 operon by binding to its mRNA. This chain is Large ribosomal subunit protein uL1, found in Histophilus somni (strain 2336) (Haemophilus somnus).